Here is a 578-residue protein sequence, read N- to C-terminus: Probable nucleoredoxin 1 (578 aa).

Thioredoxin domains follow at residues 18-172 (SLLS…RARR), 178-321 (SVLV…EKFQ), and 325-485 (ELEK…EIEA).

This sequence belongs to the nucleoredoxin family.

It catalyses the reaction [protein]-dithiol + NAD(+) = [protein]-disulfide + NADH + H(+). It carries out the reaction [protein]-dithiol + NADP(+) = [protein]-disulfide + NADPH + H(+). In terms of biological role, probable thiol-disulfide oxidoreductase required for pollen tube growth and pollen function in the pistil. Seems not to be required for in vitro pollen tube growth. May be involved in the generation of lipid signaling molecules in pistil. The polypeptide is Probable nucleoredoxin 1 (Arabidopsis thaliana (Mouse-ear cress)).